The chain runs to 385 residues: 1-deoxy-D-xylulose 5-phosphate reductoisomerase (385 aa).

The NADPH site is built by Thr-10, Gly-11, Ser-12, Ile-13, Lys-37, and Asn-124. Position 125 (Lys-125) interacts with 1-deoxy-D-xylulose 5-phosphate. Glu-126 contacts NADPH. Asp-150 lines the Mn(2+) pocket. 1-deoxy-D-xylulose 5-phosphate contacts are provided by Ser-151, Glu-152, Ser-176, and His-199. Glu-152 contacts Mn(2+). NADPH is bound at residue Gly-205. 1-deoxy-D-xylulose 5-phosphate-binding residues include Ser-212, Asn-217, Lys-218, and Glu-221. Residue Glu-221 coordinates Mn(2+).

This sequence belongs to the DXR family. Mg(2+) serves as cofactor. The cofactor is Mn(2+).

The enzyme catalyses 2-C-methyl-D-erythritol 4-phosphate + NADP(+) = 1-deoxy-D-xylulose 5-phosphate + NADPH + H(+). It participates in isoprenoid biosynthesis; isopentenyl diphosphate biosynthesis via DXP pathway; isopentenyl diphosphate from 1-deoxy-D-xylulose 5-phosphate: step 1/6. Functionally, catalyzes the NADPH-dependent rearrangement and reduction of 1-deoxy-D-xylulose-5-phosphate (DXP) to 2-C-methyl-D-erythritol 4-phosphate (MEP). The protein is 1-deoxy-D-xylulose 5-phosphate reductoisomerase of Clostridium botulinum (strain Kyoto / Type A2).